The primary structure comprises 143 residues: MSLSAKDKATVKLFWGKMSGKSELIGADALSRMLAVYPQTKIYFSHWKSCSPGSPEVKKHGKTIMMGIGEAVTKMDDLERGLLTLSELHAFKLRVDPTNFKLLSLNILVVMAIMFPLDFTPMAHLAVDKFLCALALALSEKYR.

Ser2 carries the N-acetylserine modification. The Globin domain maps to Ser2 to Arg143. His60 provides a ligand contact to O2. His89 is a binding site for heme b.

It belongs to the globin family. In terms of assembly, hb 2 is a heterotetramer of two alpha-2 and two beta-1 chains. Hb 3 is a heterotetramer of two alpha-2 and two beta-2 chains. As to expression, red blood cells.

In terms of biological role, involved in oxygen transport from gills to the various peripheral tissues. In Boreogadus saida (Polar cod), this protein is Hemoglobin subunit alpha-2 (hba2).